The following is a 155-amino-acid chain: Transcription antitermination protein NusB (155 aa).

Belongs to the NusB family.

Involved in transcription antitermination. Required for transcription of ribosomal RNA (rRNA) genes. Binds specifically to the boxA antiterminator sequence of the ribosomal RNA (rrn) operons. In Aliivibrio fischeri (strain ATCC 700601 / ES114) (Vibrio fischeri), this protein is Transcription antitermination protein NusB.